Here is a 145-residue protein sequence, read N- to C-terminus: Large ribosomal subunit protein uL13 (145 aa).

It belongs to the universal ribosomal protein uL13 family. In terms of assembly, part of the 50S ribosomal subunit.

This protein is one of the early assembly proteins of the 50S ribosomal subunit, although it is not seen to bind rRNA by itself. It is important during the early stages of 50S assembly. The sequence is that of Large ribosomal subunit protein uL13 from Bacillus velezensis (strain DSM 23117 / BGSC 10A6 / LMG 26770 / FZB42) (Bacillus amyloliquefaciens subsp. plantarum).